We begin with the raw amino-acid sequence, 395 residues long: 3-sulfinopropanoyl-CoA desulfinase (395 aa).

FAD is bound by residues Ile-121 to Ser-124, Ser-130, and Tyr-153 to Thr-156. Tyr-243–Asn-244 provides a ligand contact to substrate. FAD is bound by residues Arg-272, Gln-339, Ser-343, Gly-366–Gln-370, and Gln-387.

It belongs to the acyl-CoA dehydrogenase family. In terms of assembly, homotrimer or homotetramer. FAD serves as cofactor.

The enzyme catalyses 3-sulfinopropanoyl-CoA + H2O = propanoyl-CoA + sulfite + H(+). Its function is as follows. Catalyzes the conversion 3-sulfinopropanoyl-CoA (3SP-CoA) to propanoyl-CoA by abstraction of sulfite. Does not show dehydrogenase activity. This Cupriavidus necator (strain ATCC 43291 / DSM 13513 / CCUG 52238 / LMG 8453 / N-1) (Ralstonia eutropha) protein is 3-sulfinopropanoyl-CoA desulfinase.